We begin with the raw amino-acid sequence, 422 residues long: Protein IQ-DOMAIN 5 (422 aa).

A Nuclear localization signal motif is present at residues 23-30 (SKKDENVK). 3 IQ domains span residues 87 to 115 (ENRA…GLVR), 116 to 138 (LQAL…CMQA), and 139 to 164 (LVRV…TSQQ). A calmodulin-binding region spans residues 137 to 151 (QALVRVQARVRARRV). Residues 269–422 (GENGMEQSEN…NSDPIKQRLA (154 aa)) form a disordered region. Residues 273-308 (MEQSENVPKTQIKSVSKMPNTSNLVSGVSSQMTGPC) are compositionally biased toward polar residues. Residues 310 to 327 (SDGDSSSPGISSSIPVVS) are compositionally biased toward low complexity. Residues 355–371 (NPKERSREPNRSSKERL) show a composition bias toward basic and acidic residues. Polar residues predominate over residues 373-387 (LPNSGKSLGSQSTKA). Positions 412 to 422 (RNSDPIKQRLA) are enriched in basic and acidic residues.

This sequence belongs to the IQD family. Binds to multiple calmodulin (CaM) in the presence of Ca(2+) and CaM-like proteins. In terms of tissue distribution, expressed mostly in vegetative tissues including older parts of the root, cotyledons, leaves and shoot apical meristems (SAM). Present at low levels in pollen, siliques and seeds.

The protein resides in the nucleus. It localises to the cytoplasm. It is found in the cytoskeleton. Its subcellular location is the spindle. The protein localises to the phragmoplast. Its function is as follows. May be involved in cooperative interactions with calmodulins or calmodulin-like proteins. Recruits calmodulin (CaM) calcium sensor proteins to cortical microtubule arrays, thus being a potential scaffold in cellular signaling and trafficking. Binds to microtubules (MTs) and promotes MT assembly and dynamics to modulate pavement cell (PC) morphogenesis via cellulose deposition-dependent anisotropic cell expansion triggered by cellulose synthase complexes (CSCs). May associate with nucleic acids and regulate gene expression at the transcriptional or post-transcriptional level. In Arabidopsis thaliana (Mouse-ear cress), this protein is Protein IQ-DOMAIN 5.